The primary structure comprises 97 residues: Small integral membrane protein 8 (97 aa).

Low complexity predominate over residues 1 to 14 (MSSPSSESSNAKSS). The interval 1–26 (MSSPSSESSNAKSSPPKEEYRTPGLR) is disordered. A helical transmembrane segment spans residues 49 to 69 (VMVFGIVTITMCVAYIAYLHA).

This sequence belongs to the SMIM8 family.

Its subcellular location is the membrane. This Xenopus tropicalis (Western clawed frog) protein is Small integral membrane protein 8 (smim8).